A 92-amino-acid chain; its full sequence is Endoribonuclease VapD homolog (92 aa).

This sequence belongs to the VapD ribonuclease family. Homodimer.

In terms of biological role, cleaves ssRNA, mostly between U:A. The sequence is that of Endoribonuclease VapD homolog from Neisseria gonorrhoeae.